The primary structure comprises 743 residues: Catalase-peroxidase (743 aa).

The interval 1–22 (MEKQSNDAAVAGAPNDHGAAKC) is disordered. Positions 105–227 (WHSAGTYRIT…LGAVQMGLIY (123 aa)) form a cross-link, tryptophyl-tyrosyl-methioninium (Trp-Tyr) (with M-253). Catalysis depends on histidine 106, which acts as the Proton acceptor. Residues 227–253 (YVNPEGPNGNPDPVAAAKDIRETFFRM) constitute a cross-link (tryptophyl-tyrosyl-methioninium (Tyr-Met) (with W-105)). Histidine 268 lines the heme b pocket.

It belongs to the peroxidase family. Peroxidase/catalase subfamily. As to quaternary structure, homodimer or homotetramer. It depends on heme b as a cofactor. In terms of processing, formation of the three residue Trp-Tyr-Met cross-link is important for the catalase, but not the peroxidase activity of the enzyme.

It catalyses the reaction H2O2 + AH2 = A + 2 H2O. The catalysed reaction is 2 H2O2 = O2 + 2 H2O. Functionally, bifunctional enzyme with both catalase and broad-spectrum peroxidase activity. The chain is Catalase-peroxidase from Solibacter usitatus (strain Ellin6076).